The sequence spans 429 residues: MVSLSSHPARALRGEIAVPGDKSISHRSIMLGSIARGVTTVSGFLRGEDNIATLDAFRAMGVQVHDDGETLRIEGKGLHGLTEAEDVIDCGNSGTSIRLLTGLMAAQRFYTVLTGDRYLRRRPMRRVVEPLSRMGACIHGRDNGEKAPLAIVGRPLTGIAYDSPVASAQVKSALMLAGLYADGATRVTEPHLSRDHSERMFRHFGARLETDAAGVTVYGGHELDGRDIVVPGDISSAAFFLVAALIVPGSELLIRGVGVNPTRTGILDILAAMGGSVELLDQREVSGEPVADLLVRSSALKGIEIGGDVVPRAIDEFPVICVAAALAEGTTVIRDARELRVKETDRIAAMAANLRAAGATITETADGMIIEGTGRLNGVTVESFGDHRIAMSMLVAGLAASGAITVSDTECIATSFPTFTALLDKVAVR.

Positions 22, 23, and 27 each coordinate 3-phosphoshikimate. A phosphoenolpyruvate-binding site is contributed by lysine 22. The phosphoenolpyruvate site is built by glycine 94 and arginine 122. 3-phosphoshikimate-binding residues include serine 167, glutamine 169, aspartate 315, and lysine 342. Residue glutamine 169 participates in phosphoenolpyruvate binding. Aspartate 315 (proton acceptor) is an active-site residue. Positions 346 and 388 each coordinate phosphoenolpyruvate.

The protein belongs to the EPSP synthase family. Monomer.

It localises to the cytoplasm. The catalysed reaction is 3-phosphoshikimate + phosphoenolpyruvate = 5-O-(1-carboxyvinyl)-3-phosphoshikimate + phosphate. The protein operates within metabolic intermediate biosynthesis; chorismate biosynthesis; chorismate from D-erythrose 4-phosphate and phosphoenolpyruvate: step 6/7. In terms of biological role, catalyzes the transfer of the enolpyruvyl moiety of phosphoenolpyruvate (PEP) to the 5-hydroxyl of shikimate-3-phosphate (S3P) to produce enolpyruvyl shikimate-3-phosphate and inorganic phosphate. This is 3-phosphoshikimate 1-carboxyvinyltransferase from Geobacter sulfurreducens (strain ATCC 51573 / DSM 12127 / PCA).